The chain runs to 126 residues: MFS14 protein (126 aa).

Positions 1–23 form a signal peptide, or 24, or 26; sequence MALEAATAPRALLAACLVLLVLG.

As to expression, enhanced expression in male flowers. Accumulates in the tapetum.

This chain is MFS14 protein (MFS14), found in Zea mays (Maize).